Reading from the N-terminus, the 180-residue chain is Oligoribonuclease (180 aa).

The region spanning 7–170 is the Exonuclease domain; that stretch reads LIWIDLEMTG…DDIRESIAEL (164 aa). Residue tyrosine 128 is part of the active site.

This sequence belongs to the oligoribonuclease family.

It localises to the cytoplasm. In terms of biological role, 3'-to-5' exoribonuclease specific for small oligoribonucleotides. The polypeptide is Oligoribonuclease (Pseudomonas aeruginosa (strain UCBPP-PA14)).